The chain runs to 485 residues: UDP-glycosyltransferase 71B2 (485 aa).

Residues S287, 354 to 356, 371 to 379, and 393 to 396 each bind UDP-alpha-D-glucose; these read APQ, HCGWNSTLE, and YAEQ.

This sequence belongs to the UDP-glycosyltransferase family.

Its function is as follows. Glucosyltransferase that glucosylates the cell wall inhibitor hypostatin in vivo to form a bioactive glucoside. In Arabidopsis thaliana (Mouse-ear cress), this protein is UDP-glycosyltransferase 71B2 (UGT71B2).